The primary structure comprises 689 residues: Protein asunder (689 aa).

Positions 521-550 (NGARLKLSKAKDQYRLLYRELEQLIQLNAT) form a coiled coil. Disordered regions lie at residues 591–619 (SPER…SKRR) and 665–689 (GTKD…SVRS). Over residues 599-614 (SSVGASGSSNSNSLLK) the composition is skewed to low complexity. Residues 613-619 (LKASKRR) carry the Nuclear localization signal (NLS) motif.

It belongs to the Integrator subunit 13 family. As to quaternary structure, belongs to the multiprotein complex Integrator, at least composed of IntS1, IntS2, IntS3, IntS4, omd/IntS5, IntS6, defl/IntS7, IntS8, IntS9, IntS10, IntS11, IntS12, asun/IntS13, IntS14 and IntS15. The core complex associates with protein phosphatase 2A subunits mts/PP2A and Pp2A-29B, to form the Integrator-PP2A (INTAC) complex. In terms of processing, phosphorylated.

It is found in the nucleus. Its subcellular location is the cytoplasm. The protein localises to the perinuclear region. Its function is as follows. Component of the integrator complex, a multiprotein complex that terminates RNA polymerase II (Pol II) transcription in the promoter-proximal region of genes. The integrator complex provides a quality checkpoint during transcription elongation by driving premature transcription termination of transcripts that are unfavorably configured for transcriptional elongation: the complex terminates transcription by (1) catalyzing dephosphorylation of the C-terminal domain (CTD) of Pol II subunit Polr2A/Rbp1 and Spt5, and (2) degrading the exiting nascent RNA transcript via endonuclease activity. The integrator complex is also involved in the 3'-end processing of the U7 snRNA, and also the spliceosomal snRNAs U1, U2, U4 and U5. This is Protein asunder (asun) from Drosophila sechellia (Fruit fly).